The chain runs to 426 residues: Serine hydroxymethyltransferase 1 (426 aa).

(6S)-5,6,7,8-tetrahydrofolate contacts are provided by residues leucine 118 and 122–124; that span reads GHL. Lysine 227 is subject to N6-(pyridoxal phosphate)lysine.

It belongs to the SHMT family. In terms of assembly, homodimer. The cofactor is pyridoxal 5'-phosphate.

The protein localises to the cytoplasm. The enzyme catalyses (6R)-5,10-methylene-5,6,7,8-tetrahydrofolate + glycine + H2O = (6S)-5,6,7,8-tetrahydrofolate + L-serine. The protein operates within one-carbon metabolism; tetrahydrofolate interconversion. Its pathway is amino-acid biosynthesis; glycine biosynthesis; glycine from L-serine: step 1/1. Catalyzes the reversible interconversion of serine and glycine with tetrahydrofolate (THF) serving as the one-carbon carrier. This reaction serves as the major source of one-carbon groups required for the biosynthesis of purines, thymidylate, methionine, and other important biomolecules. Also exhibits THF-independent aldolase activity toward beta-hydroxyamino acids, producing glycine and aldehydes, via a retro-aldol mechanism. This chain is Serine hydroxymethyltransferase 1, found in Mycobacterium bovis (strain ATCC BAA-935 / AF2122/97).